The chain runs to 292 residues: N-acetylneuraminate lyase (292 aa).

The aceneuramate site is built by Ser47 and Thr48. Catalysis depends on Tyr136, which acts as the Proton donor. Lys164 functions as the Schiff-base intermediate with substrate in the catalytic mechanism. 5 residues coordinate aceneuramate: Thr166, Gly188, Asp190, Glu191, and Ser207.

Belongs to the DapA family. NanA subfamily. As to quaternary structure, homotetramer.

The protein resides in the cytoplasm. It carries out the reaction aceneuramate = aldehydo-N-acetyl-D-mannosamine + pyruvate. It participates in amino-sugar metabolism; N-acetylneuraminate degradation; D-fructose 6-phosphate from N-acetylneuraminate: step 1/5. In terms of biological role, catalyzes the reversible aldol cleavage of N-acetylneuraminic acid (sialic acid; Neu5Ac) to form pyruvate and N-acetylmannosamine (ManNAc) via a Schiff base intermediate. The polypeptide is N-acetylneuraminate lyase (Actinobacillus pleuropneumoniae serotype 5b (strain L20)).